Here is a 103-residue protein sequence, read N- to C-terminus: Large ribosomal subunit protein bL21 (103 aa).

Belongs to the bacterial ribosomal protein bL21 family. In terms of assembly, part of the 50S ribosomal subunit. Contacts protein L20.

Functionally, this protein binds to 23S rRNA in the presence of protein L20. In Wolinella succinogenes (strain ATCC 29543 / DSM 1740 / CCUG 13145 / JCM 31913 / LMG 7466 / NCTC 11488 / FDC 602W) (Vibrio succinogenes), this protein is Large ribosomal subunit protein bL21.